The sequence spans 139 residues: Ribosome-binding factor A (139 aa).

The disordered stretch occupies residues 112-139; that stretch reads EARTQGQAAPAPDVEPAPGAAPDDEAEE. Residues 119-132 are compositionally biased toward low complexity; the sequence is AAPAPDVEPAPGAA.

Belongs to the RbfA family. As to quaternary structure, monomer. Binds 30S ribosomal subunits, but not 50S ribosomal subunits or 70S ribosomes.

It localises to the cytoplasm. Functionally, one of several proteins that assist in the late maturation steps of the functional core of the 30S ribosomal subunit. Associates with free 30S ribosomal subunits (but not with 30S subunits that are part of 70S ribosomes or polysomes). Required for efficient processing of 16S rRNA. May interact with the 5'-terminal helix region of 16S rRNA. This chain is Ribosome-binding factor A, found in Anaeromyxobacter dehalogenans (strain 2CP-1 / ATCC BAA-258).